A 162-amino-acid chain; its full sequence is NADH-quinone oxidoreductase subunit I (162 aa).

2 4Fe-4S ferredoxin-type domains span residues 52–82 (LRRY…IEAG) and 93–122 (TRYD…EGPN). Residues Cys-62, Cys-65, Cys-68, Cys-72, Cys-102, Cys-105, Cys-108, and Cys-112 each contribute to the [4Fe-4S] cluster site.

Belongs to the complex I 23 kDa subunit family. As to quaternary structure, NDH-1 is composed of 14 different subunits. Subunits NuoA, H, J, K, L, M, N constitute the membrane sector of the complex. [4Fe-4S] cluster is required as a cofactor.

The protein localises to the cell inner membrane. The enzyme catalyses a quinone + NADH + 5 H(+)(in) = a quinol + NAD(+) + 4 H(+)(out). In terms of biological role, NDH-1 shuttles electrons from NADH, via FMN and iron-sulfur (Fe-S) centers, to quinones in the respiratory chain. The immediate electron acceptor for the enzyme in this species is believed to be ubiquinone. Couples the redox reaction to proton translocation (for every two electrons transferred, four hydrogen ions are translocated across the cytoplasmic membrane), and thus conserves the redox energy in a proton gradient. In Methylorubrum populi (strain ATCC BAA-705 / NCIMB 13946 / BJ001) (Methylobacterium populi), this protein is NADH-quinone oxidoreductase subunit I.